The following is a 148-amino-acid chain: Deoxyuridine 5'-triphosphate nucleotidohydrolase (148 aa).

DUMP contacts are provided by S69, G82, D85, Y88, R137, F142, and G143.

This sequence belongs to the dUTPase family. Homotrimer. Mg(2+) serves as cofactor.

The enzyme catalyses dUTP + H2O = dUMP + diphosphate + H(+). It functions in the pathway pyrimidine metabolism; dUMP biosynthesis; dUMP from dCTP (dUTP route): step 2/2. Functionally, involved in nucleotide metabolism via production of dUMP, the immediate precursor of thymidine nucleotides, and decreases the intracellular concentration of dUTP so that uracil cannot be incorporated into DNA. The sequence is that of Deoxyuridine 5'-triphosphate nucleotidohydrolase (DUT1) from Kluyveromyces lactis (strain ATCC 8585 / CBS 2359 / DSM 70799 / NBRC 1267 / NRRL Y-1140 / WM37) (Yeast).